Consider the following 565-residue polypeptide: NAD-dependent malic enzyme (565 aa).

Residue Y104 is the Proton donor of the active site. R157 provides a ligand contact to NAD(+). K175 functions as the Proton acceptor in the catalytic mechanism. Residues E246, D247, and D270 each coordinate a divalent metal cation. D270 and N418 together coordinate NAD(+).

This sequence belongs to the malic enzymes family. As to quaternary structure, homotetramer. Requires Mg(2+) as cofactor. Mn(2+) serves as cofactor.

The enzyme catalyses (S)-malate + NAD(+) = pyruvate + CO2 + NADH. It carries out the reaction oxaloacetate + H(+) = pyruvate + CO2. The chain is NAD-dependent malic enzyme from Escherichia coli (strain K12 / MC4100 / BW2952).